A 410-amino-acid chain; its full sequence is MKIKFEIKYKDAAGKVGKIKLNGKTIETPYLFPVINPFKQELPIKEIKKMGFNAIITNAYILFKRKEEVMEKGIHNFLGFDGIIETDSGAYQLLQYGDIDIENEDIIYFQNEIGVDIGNILDIPSYGKTYEEAKKDLEITLERLKQAIEMANFAINGPIQGDKYLDLRYKALEEVSKLDIDIYAIGGIVPYMNQYKIESLAKIIGPLLLDIPRDRPVHLFGLGHPLIMPLFVALGADLFDSASYSLFAKEERILTPFRTFRLEDLTDSYILDYKASELKGMENKTYIIAKHNLLVLRNEINFIRDLIRQNRLWDYVIIKAHAHPSIYFATKYVLENLYEKLKEHEPITKRVGILYQGELTELRSDLRYAIEQLKKLDKSQINDILDYAWPFGQFEIGEKDKKLFFQRFLK.

The active-site Nucleophile is D87. Residues D122 and G187 each coordinate substrate.

This sequence belongs to the archaeosine tRNA-ribosyltransferase family. Zn(2+) is required as a cofactor.

The enzyme catalyses guanosine(15) in tRNA + 7-cyano-7-deazaguanine = 7-cyano-7-carbaguanosine(15) in tRNA + guanine. The protein operates within tRNA modification; archaeosine-tRNA biosynthesis. In terms of biological role, exchanges the guanine residue with 7-cyano-7-deazaguanine (preQ0) at position 15 in the dihydrouridine loop (D-loop) of archaeal tRNAs. This is tRNA-guanine(15) transglycosylase from Nanoarchaeum equitans (strain Kin4-M).